Reading from the N-terminus, the 952-residue chain is MPGKIENGTPKDLKTGNDFVSAAKSLLDRAFKSHHSYYGLCSTSCQVYDTAWVAMIPKTRDNVKQWLFPECFHYLLKTQAADGSWGSLPTTQTAGILDTASAVLALLCHAQEPLQILDVSPDEMGLRIEHGVTSLKRQLAVWNDVEDTNHIGVEFIIPALLSMLEKELDVPSFEFPCRSILERMHGEKLGHFDLEQVYGKPSSLLHSLEAFLGKLDFDRLSHHLYHGSMMASPSSTAAYLIGATKWDDEAEDYLRHVMRNGAGHGNGGISGTFPTTHFECSWIIATLLKGGFTLKQIDGDGLRGLSTILLEALRDENGVIGFAPRTADVDDTAKALLALSLVNQPVSPDIMIKVFEGKDHFTTFGSERDPSLTSNLHVLLSLLKQSNLSQYHPQILKTTLFTCRWWWGSDHCVKDKWNLSHLYPTMLLVEAFTEVLHLIDGGELSSLFDESFKCKIGLSIFQAVLRIILTQDNDGSWRGYREQTCYAILALVQARHVCFFTHMVDRLQSCVDRGFSWLKSCSFHSQDLTWTSKTAYEVGFVAEAYKLAALQSASLEVPAATIGHSVTSAVPSSDLEKYMRLVRKTALFSPLDEWGLMASIIESSFFVPLLQAQRVEIYPRDNIKVDEDKYLSIIPFTWVGCNNRSRTFASNRWLYDMMYLSLLGYQTDEYMEAVAGPVFGDVSLLHQTIDKVIDNTMGNLARANGTVHSGNGHQHESPNIGQVEDTLTRFTNSVLNHKDVLNSSSSDQDTLRREFRTFMHAHITQIEDNSRFSKQASSDAFSSPEQSYFQWVNSTGGSHVACAYSFAFSNCLMSANLLQGKDAFPSGTQKYLISSVMRHATNMCRMYNDFGSIARDNAERNVNSIHFPEFTLCNGTSQNLDERKERLLKIATYEQGYLDRALEALERQSRDDAGDRAGSKDMRKLKIVKLFCDVTDLYDQLYVIKDLSSSMK.

A DXDD B-type cyclization motif motif is present at residues 328 to 331 (DVDD). Positions 668, 672, 848, 849, 852, and 856 each coordinate Mg(2+). The short motif at 668–672 (DEYME) is the DEXXE A-type cyclization motif element.

It belongs to the terpene synthase family. Mg(2+) is required as a cofactor.

The enzyme catalyses ent-copalyl diphosphate = ent-kaur-16-ene + diphosphate. It carries out the reaction (2E,6E,10E)-geranylgeranyl diphosphate = ent-copalyl diphosphate. It functions in the pathway plant hormone biosynthesis; gibberellin biosynthesis. In terms of biological role, bifunctional ent-kaurene synthase; part of the gene cluster that mediates the biosynthesis of gibberellins (GAs), diterpenoids that may provide a selective advantage during infection of the preferred host plant, rice. Gibberellins (GAs) are diterpenoids and are synthesized via the mevalonate pathway. Biosynthesis of the major metabolite GA3 (gibberellic acid) from geranylgeranyl diphosphate (GGPP) requires 13 steps. The GGPP produced by the geranylgeranyl diphosphate synthase GGS2 is converted to ent-kaurene via ent-copalyldiphosphate in a two-step cyclization reaction performed by the bifunctional ent-copalyl diphosphate synthase/ent-kaurene synthase enzyme (CPS/KS). Ent-Kaurene is metabolized to GAs by a series of oxidation reactions catalyzed by cytochrome P450 monooxygenases. Cytochrome P450 monooxygenase P450-4 is an ent-kaurene oxidase that catalyzes the three oxidation steps between ent-kaurene and ent-kaurenoic acid. The highly multifunctional cytochrome P450 monooxygenase P450-1 then catalyzes four steps involving oxidation at two carbon atoms, in the main pathway from ent-kaurenoic acid to GA14 via GA12-aldehyde as well as producing kaurenolides and fujenoic acids as by-products. The cytochrome P450 monooxygenase P450-2 then converts GA14 to GA4 by removal of C-20. GA4 is further converted to GA7 by the GA4 desaturase DES via 1,2-desaturation before cytochrome P450 monooxygenase P450-3, a 13-hydroxylase, hydroxylates GA7 to GA3, the final product of the GA-biosynthetic pathway. This Gibberella fujikuroi (strain CBS 195.34 / IMI 58289 / NRRL A-6831) (Bakanae and foot rot disease fungus) protein is Bifunctional ent-kaurene synthase.